Here is a 476-residue protein sequence, read N- to C-terminus: tRNA sulfurtransferase (476 aa).

Positions 54–156 (AENDIPLSKV…GKDALIYDKI (103 aa)) constitute a THUMP domain. Residues 174–175 (MV), Lys-256, Gly-278, and Gln-287 contribute to the ATP site. Cys-334 and Cys-433 form a disulfide bridge. In terms of domain architecture, Rhodanese spans 388 to 470 (NLEDAVFIDL…LSKQKGSVDE (83 aa)). Cys-433 acts as the Cysteine persulfide intermediate in catalysis.

The protein belongs to the ThiI family.

It is found in the cytoplasm. It carries out the reaction [ThiI sulfur-carrier protein]-S-sulfanyl-L-cysteine + a uridine in tRNA + 2 reduced [2Fe-2S]-[ferredoxin] + ATP + H(+) = [ThiI sulfur-carrier protein]-L-cysteine + a 4-thiouridine in tRNA + 2 oxidized [2Fe-2S]-[ferredoxin] + AMP + diphosphate. The catalysed reaction is [ThiS sulfur-carrier protein]-C-terminal Gly-Gly-AMP + S-sulfanyl-L-cysteinyl-[cysteine desulfurase] + AH2 = [ThiS sulfur-carrier protein]-C-terminal-Gly-aminoethanethioate + L-cysteinyl-[cysteine desulfurase] + A + AMP + 2 H(+). It functions in the pathway cofactor biosynthesis; thiamine diphosphate biosynthesis. Its function is as follows. Catalyzes the ATP-dependent transfer of a sulfur to tRNA to produce 4-thiouridine in position 8 of tRNAs, which functions as a near-UV photosensor. Also catalyzes the transfer of sulfur to the sulfur carrier protein ThiS, forming ThiS-thiocarboxylate. This is a step in the synthesis of thiazole, in the thiamine biosynthesis pathway. The sulfur is donated as persulfide by IscS. The sequence is that of tRNA sulfurtransferase from Thermoplasma volcanium (strain ATCC 51530 / DSM 4299 / JCM 9571 / NBRC 15438 / GSS1).